The chain runs to 346 residues: Probable RNA methyltransferase Pmen_2155 (346 aa).

The Proton acceptor role is filled by Glu91. The Radical SAM core domain maps to 94-320 (LLPRDGLCIS…TKVRNSAGQD (227 aa)). Cys101 and Cys325 are disulfide-bonded. The [4Fe-4S] cluster site is built by Cys108, Cys112, and Cys115. Residues 153-154 (GE), Ser183, 206-208 (SLH), and Asn282 contribute to the S-adenosyl-L-methionine site. The S-methylcysteine intermediate role is filled by Cys325.

The protein belongs to the radical SAM superfamily. RlmN family. [4Fe-4S] cluster is required as a cofactor.

It is found in the cytoplasm. The sequence is that of Probable RNA methyltransferase Pmen_2155 from Ectopseudomonas mendocina (strain ymp) (Pseudomonas mendocina).